A 294-amino-acid chain; its full sequence is S-methyl-5'-thioadenosine phosphorylase (294 aa).

Residues Ser-16, 58 to 59 (RH), and 91 to 92 (SA) contribute to the phosphate site. A substrate-binding site is contributed by Met-189. Thr-190 is a phosphate binding site. Residue 213-215 (DFD) participates in substrate binding.

The protein belongs to the PNP/MTAP phosphorylase family. MTAP subfamily. In terms of assembly, homohexamer. Dimer of a homotrimer.

The catalysed reaction is S-methyl-5'-thioadenosine + phosphate = 5-(methylsulfanyl)-alpha-D-ribose 1-phosphate + adenine. It catalyses the reaction 5'-deoxyadenosine + phosphate = 5-deoxy-alpha-D-ribose 1-phosphate + adenine. Its pathway is amino-acid biosynthesis; L-methionine biosynthesis via salvage pathway; S-methyl-5-thio-alpha-D-ribose 1-phosphate from S-methyl-5'-thioadenosine (phosphorylase route): step 1/1. Its function is as follows. Catalyzes the reversible phosphorylation of S-methyl-5'-thioadenosine (MTA) to adenine and 5-methylthioribose-1-phosphate. Involved in the breakdown of MTA, a major by-product of polyamine biosynthesis. Responsible for the first step in the methionine salvage pathway after MTA has been generated from S-adenosylmethionine. Has broad substrate specificity with 6-aminopurine nucleosides as preferred substrates. Also catalyzes the phosphorylation of 5'-deoxyadenosine (5'dAdo) to 5-deoxyribose 1-phosphate. Part of a bifunctional DHAP-shunt salvage pathway for SAM by-products. This chain is S-methyl-5'-thioadenosine phosphorylase, found in Rhodospirillum rubrum (strain ATCC 11170 / ATH 1.1.1 / DSM 467 / LMG 4362 / NCIMB 8255 / S1).